A 379-amino-acid polypeptide reads, in one-letter code: Leukocyte elastase inhibitor A (379 aa).

Ser300 is subject to Phosphoserine. A CARD-binding motif (CBM) region spans residues 351–379; it reads EFTVDHPFIFFIRHNPTSNVLFLGRVCSP.

It belongs to the serpin family. Ov-serpin subfamily. Monomer. Interacts (via C-terminus) with CASP1 and CASP4 (via CARD domain); these interactions regulate the activity of inflammatory caspases. Ubiquitous with higher expression in pancreas, spleen and bone marrow.

The protein resides in the secreted. The protein localises to the cytoplasm. It is found in the cytolytic granule. Its subcellular location is the early endosome. Neutrophil serine protease inhibitor that plays an essential role in the regulation of the innate immune response, inflammation and cellular homeostasis. Acts primarily to protect the cell from proteases released in the cytoplasm during stress or infection. These proteases are important in killing microbes but when released from granules, these potent enzymes also destroy host proteins and contribute to mortality. Regulates the activity of the neutrophil proteases elastase, cathepsin G, proteinase-3, chymase, chymotrypsin, and kallikrein-3. Also acts as a potent intracellular inhibitor of granzyme H. During inflammation, limits the activity of inflammatory caspases CASP1 and CASP4 by suppressing their caspase-recruitment domain (CARD) oligomerization and enzymatic activation. In addition, promotes the proliferation of beta-cells when secreted. This is Leukocyte elastase inhibitor A (Serpinb1a) from Mus musculus (Mouse).